Consider the following 289-residue polypeptide: ATP synthase gamma chain (289 aa).

The protein belongs to the ATPase gamma chain family. As to quaternary structure, F-type ATPases have 2 components, CF(1) - the catalytic core - and CF(0) - the membrane proton channel. CF(1) has five subunits: alpha(3), beta(3), gamma(1), delta(1), epsilon(1). CF(0) has three main subunits: a, b and c.

It is found in the cell inner membrane. Functionally, produces ATP from ADP in the presence of a proton gradient across the membrane. The gamma chain is believed to be important in regulating ATPase activity and the flow of protons through the CF(0) complex. This Nitrosococcus oceani (strain ATCC 19707 / BCRC 17464 / JCM 30415 / NCIMB 11848 / C-107) protein is ATP synthase gamma chain.